The following is a 678-amino-acid chain: NADPH--cytochrome P450 reductase (678 aa).

Position 2 is an N-acetylglycine (Gly2). At Gly2–Leu22 the chain is on the lumenal side. A helical transmembrane segment spans residues Phe23–Ile43. At Phe44–Ser678 the chain is on the cytoplasmic side. Ser63 bears the Phosphoserine mark. The Flavodoxin-like domain occupies Ile80–Trp224. FMN-binding positions include Ser86 to Ala91, Ala138 to Gly141, Leu173 to Asn182, and Asp208. One can recognise an FAD-binding FR-type domain in the interval Lys279–Pro521. Arg298 contributes to the NADP(+) binding site. FAD contacts are provided by residues Arg424, Arg454–Ser457, Cys472–Val474, Tyr478, and Gly488–Thr491. NADP(+) contacts are provided by residues Thr535, Ser596–Arg597, Lys602–Gln606, and Asp639. Trp677 serves as a coordination point for FAD.

It belongs to the NADPH--cytochrome P450 reductase family. In the N-terminal section; belongs to the flavodoxin family. The protein in the C-terminal section; belongs to the flavoprotein pyridine nucleotide cytochrome reductase family. Requires FAD as cofactor. The cofactor is FMN.

Its subcellular location is the endoplasmic reticulum membrane. It catalyses the reaction 2 oxidized [cytochrome P450] + NADPH = 2 reduced [cytochrome P450] + NADP(+) + H(+). Functionally, this enzyme is required for electron transfer from NADP to cytochrome P450 in microsomes. It can also provide electron transfer to heme oxygenase and cytochrome B5. The sequence is that of NADPH--cytochrome P450 reductase from Sus scrofa (Pig).